Consider the following 286-residue polypeptide: Protein GrpE (286 aa).

Disordered stretches follow at residues 1–51 (MSED…ETTA) and 260–286 (VAAP…QPTT). Low complexity-rich tracts occupy residues 39 to 50 (QPSSTPQTPETT) and 271 to 286 (TEST…QPTT).

The protein belongs to the GrpE family. Homodimer.

The protein resides in the cytoplasm. Its function is as follows. Participates actively in the response to hyperosmotic and heat shock by preventing the aggregation of stress-denatured proteins, in association with DnaK and GrpE. It is the nucleotide exchange factor for DnaK and may function as a thermosensor. Unfolded proteins bind initially to DnaJ; upon interaction with the DnaJ-bound protein, DnaK hydrolyzes its bound ATP, resulting in the formation of a stable complex. GrpE releases ADP from DnaK; ATP binding to DnaK triggers the release of the substrate protein, thus completing the reaction cycle. Several rounds of ATP-dependent interactions between DnaJ, DnaK and GrpE are required for fully efficient folding. The polypeptide is Protein GrpE (Gloeothece citriformis (strain PCC 7424) (Cyanothece sp. (strain PCC 7424))).